The sequence spans 476 residues: Tubulointerstitial nephritis antigen (476 aa).

Asn-38 is a glycosylation site (N-linked (GlcNAc...) asparagine). The 49-residue stretch at Arg-59–Gly-107 folds into the SMB domain. Disulfide bonds link Cys-63/Cys-83 and Cys-87/Cys-94. Asn-175, Asn-314, Asn-360, and Asn-455 each carry an N-linked (GlcNAc...) asparagine glycan.

The protein belongs to the peptidase C1 family.

The protein resides in the secreted. The protein localises to the extracellular space. Its subcellular location is the extracellular matrix. It localises to the basement membrane. Functionally, mediates adhesion of proximal tubule epithelial cells via integrins alpha3-beta1 and alphaV-beta3. This is a non catalytic peptidase C1 family protein. The protein is Tubulointerstitial nephritis antigen (TINAG) of Bos taurus (Bovine).